Reading from the N-terminus, the 1197-residue chain is Probable DNA polymerase (1197 aa).

It belongs to the DNA polymerase type-B family.

It localises to the mitochondrion. It catalyses the reaction DNA(n) + a 2'-deoxyribonucleoside 5'-triphosphate = DNA(n+1) + diphosphate. The sequence is that of Probable DNA polymerase from Podospora anserina (Pleurage anserina).